Here is an 840-residue protein sequence, read N- to C-terminus: Putative pentatricopeptide repeat-containing protein At1g31840 (840 aa).

PPR repeat units follow at residues 98–128 (KDPS…MITN), 145–179 (DADV…GVVI), 180–214 (PQDS…GIEP), 216–250 (GVSA…GFRV), 251–284 (GIVS…GPAP), 285–319 (NVVT…GIEP), 320–354 (DLIA…GVKL), 355–389 (DVVV…GISP), 390–424 (NVVT…GMEP), 425–459 (SIVT…GYPP), 460–494 (DVVI…SIRL), 495–529 (NVVV…GIKP), 530–564 (DVAT…GLEP), 565–599 (DALA…KISA), 600–634 (DIAV…KMEP), 635–669 (DIVT…PFGP), 670–704 (NTVT…GSKP), 705–739 (NAVT…GISP), 740–774 (SIVS…KLLP), and 775–809 (DVVA…GVKP).

It belongs to the PPR family. P subfamily.

The chain is Putative pentatricopeptide repeat-containing protein At1g31840 from Arabidopsis thaliana (Mouse-ear cress).